The chain runs to 571 residues: Sulfite reductase [NADPH] hemoprotein beta-component (571 aa).

[4Fe-4S] cluster-binding residues include Cys435, Cys441, Cys480, and Cys484. Cys484 contributes to the siroheme binding site.

The protein belongs to the nitrite and sulfite reductase 4Fe-4S domain family. Alpha(8)-beta(8). The alpha component is a flavoprotein, the beta component is a hemoprotein. Siroheme is required as a cofactor. It depends on [4Fe-4S] cluster as a cofactor.

It catalyses the reaction hydrogen sulfide + 3 NADP(+) + 3 H2O = sulfite + 3 NADPH + 4 H(+). It participates in sulfur metabolism; hydrogen sulfide biosynthesis; hydrogen sulfide from sulfite (NADPH route): step 1/1. Component of the sulfite reductase complex that catalyzes the 6-electron reduction of sulfite to sulfide. This is one of several activities required for the biosynthesis of L-cysteine from sulfate. This chain is Sulfite reductase [NADPH] hemoprotein beta-component, found in Dickeya chrysanthemi (strain Ech1591) (Dickeya zeae (strain Ech1591)).